Reading from the N-terminus, the 511-residue chain is Lysine--tRNA ligase (511 aa).

A disordered region spans residues 1–21; that stretch reads MHTEKDPNKNTPEQQTPISLN. Polar residues predominate over residues 9–21; that stretch reads KNTPEQQTPISLN. Residues Glu422 and Glu429 each coordinate Mg(2+).

The protein belongs to the class-II aminoacyl-tRNA synthetase family. In terms of assembly, homodimer. Mg(2+) serves as cofactor.

It localises to the cytoplasm. The catalysed reaction is tRNA(Lys) + L-lysine + ATP = L-lysyl-tRNA(Lys) + AMP + diphosphate. The sequence is that of Lysine--tRNA ligase from Pelodictyon phaeoclathratiforme (strain DSM 5477 / BU-1).